The following is a 340-amino-acid chain: Extracellular matrix protein-binding protein emp (340 aa).

Positions 1 to 26 (MKKKLLVLTMSTLFATQIMNSNHAKA) are cleaved as a signal peptide.

It is found in the cell surface. In terms of biological role, adhesin that binds to the host cell extracellular matrix proteins fibronectin, fibrinogen, collagen, and vitronectin. This Staphylococcus aureus (strain USA300) protein is Extracellular matrix protein-binding protein emp (emp).